Consider the following 263-residue polypeptide: Dermonecrotic toxin SpaSicTox-betaIF1 (263 aa).

Positions 15 and 17 each coordinate Mg(2+). His-31 acts as the Nucleophile in catalysis. 2 disulfide bridges follow: Cys-35/Cys-41 and Cys-37/Cys-179. Position 75 (Asp-75) interacts with Mg(2+).

This sequence belongs to the arthropod phospholipase D family. Class II subfamily. The cofactor is Mg(2+). In terms of tissue distribution, expressed by the venom gland.

Its subcellular location is the secreted. The enzyme catalyses an N-(acyl)-sphingosylphosphocholine = an N-(acyl)-sphingosyl-1,3-cyclic phosphate + choline. The catalysed reaction is an N-(acyl)-sphingosylphosphoethanolamine = an N-(acyl)-sphingosyl-1,3-cyclic phosphate + ethanolamine. It carries out the reaction a 1-acyl-sn-glycero-3-phosphocholine = a 1-acyl-sn-glycero-2,3-cyclic phosphate + choline. It catalyses the reaction a 1-acyl-sn-glycero-3-phosphoethanolamine = a 1-acyl-sn-glycero-2,3-cyclic phosphate + ethanolamine. In terms of biological role, dermonecrotic toxins cleave the phosphodiester linkage between the phosphate and headgroup of certain phospholipids (sphingolipid and lysolipid substrates), forming an alcohol (often choline) and a cyclic phosphate. This toxin acts on sphingomyelin (SM). It may also act on ceramide phosphoethanolamine (CPE), lysophosphatidylcholine (LPC) and lysophosphatidylethanolamine (LPE), but not on lysophosphatidylserine (LPS), and lysophosphatidylglycerol (LPG). It acts by transphosphatidylation, releasing exclusively cyclic phosphate products as second products. Induces dermonecrosis, hemolysis, increased vascular permeability, edema, inflammatory response, and platelet aggregation. The chain is Dermonecrotic toxin SpaSicTox-betaIF1 from Sicarius patagonicus (Six-eyed sand spider).